A 447-amino-acid chain; its full sequence is uncharacterized protein (447 aa).

In terms of domain architecture, FAD-binding PCMH-type spans 29 to 201 (VDVYPLVFVF…TQYTFKVHRA (173 aa)).

The protein belongs to the oxygen-dependent FAD-linked oxidoreductase family. FAD is required as a cofactor.

The protein localises to the spore coat. This is an uncharacterized protein from Bacillus subtilis (strain 168).